The primary structure comprises 163 residues: Urease accessory protein UreE (163 aa).

The segment at 144–163 (QPEPGAYGGSSAGSHDGHHH) is disordered.

This sequence belongs to the UreE family.

The protein localises to the cytoplasm. Functionally, involved in urease metallocenter assembly. Binds nickel. Probably functions as a nickel donor during metallocenter assembly. This is Urease accessory protein UreE from Aliivibrio fischeri (strain ATCC 700601 / ES114) (Vibrio fischeri).